We begin with the raw amino-acid sequence, 202 residues long: Pyrrolidone-carboxylate peptidase (202 aa).

Residues Glu-78, Cys-141, and His-165 contribute to the active site.

This sequence belongs to the peptidase C15 family. In terms of assembly, homotetramer.

It is found in the cytoplasm. It catalyses the reaction Release of an N-terminal pyroglutamyl group from a polypeptide, the second amino acid generally not being Pro.. Its function is as follows. Removes 5-oxoproline from various penultimate amino acid residues except L-proline. The protein is Pyrrolidone-carboxylate peptidase of Thermosipho melanesiensis (strain DSM 12029 / CIP 104789 / BI429).